Reading from the N-terminus, the 423-residue chain is Heat shock transcription factor, X-linked (423 aa).

Residues 1–25 (MEDKRSLSMARCEERNSRGQDHGLE) are compositionally biased toward basic and acidic residues. Disordered stretches follow at residues 1–56 (MEDK…STGS), 215–303 (KSAP…EGSQ), and 397–423 (PHSH…DQST). A DNA-binding region spans residues 98–282 (PFPQKLWRLV…PATPVMVPDS (185 aa)). Lys215 is covalently cross-linked (Glycyl lysine isopeptide (Lys-Gly) (interchain with G-Cter in SUMO1)). Positions 243 to 254 (HTSPNENDQVTP) are enriched in polar residues.

Belongs to the HSF family. Testis-specific.

It localises to the nucleus. The protein resides in the cytoplasm. This chain is Heat shock transcription factor, X-linked (HSFX1), found in Homo sapiens (Human).